The following is a 216-amino-acid chain: Large ribosomal subunit protein uL3 (216 aa).

The segment at 134–153 (RATHGNSRSHNVPGSIGMAQ) is disordered. The residue at position 153 (glutamine 153) is an N5-methylglutamine.

Belongs to the universal ribosomal protein uL3 family. In terms of assembly, part of the 50S ribosomal subunit. Forms a cluster with proteins L14 and L19. In terms of processing, methylated by PrmB.

In terms of biological role, one of the primary rRNA binding proteins, it binds directly near the 3'-end of the 23S rRNA, where it nucleates assembly of the 50S subunit. This is Large ribosomal subunit protein uL3 from Cupriavidus taiwanensis (strain DSM 17343 / BCRC 17206 / CCUG 44338 / CIP 107171 / LMG 19424 / R1) (Ralstonia taiwanensis (strain LMG 19424)).